We begin with the raw amino-acid sequence, 236 residues long: Ubiquinone biosynthesis O-methyltransferase (236 aa).

Positions 39, 59, 80, and 124 each coordinate S-adenosyl-L-methionine.

This sequence belongs to the methyltransferase superfamily. UbiG/COQ3 family.

The catalysed reaction is a 3-demethylubiquinol + S-adenosyl-L-methionine = a ubiquinol + S-adenosyl-L-homocysteine + H(+). The enzyme catalyses a 3-(all-trans-polyprenyl)benzene-1,2-diol + S-adenosyl-L-methionine = a 2-methoxy-6-(all-trans-polyprenyl)phenol + S-adenosyl-L-homocysteine + H(+). The protein operates within cofactor biosynthesis; ubiquinone biosynthesis. In terms of biological role, O-methyltransferase that catalyzes the 2 O-methylation steps in the ubiquinone biosynthetic pathway. The chain is Ubiquinone biosynthesis O-methyltransferase from Pseudoalteromonas translucida (strain TAC 125).